Reading from the N-terminus, the 803-residue chain is Urocanate reductase (803 aa).

FMN phosphoryl serine is present on Ser258. FAD contacts are provided by Ala311, Glu330, Asn338, Thr339, Gly343, Gly344, and Asp573. Arg632 serves as the catalytic Proton donor. Positions 739, 768, 783, and 784 each coordinate FAD.

Belongs to the FAD-dependent oxidoreductase 2 family. FRD/SDH subfamily. FAD is required as a cofactor. Requires FMN as cofactor.

It catalyses the reaction dihydrourocanate + A = urocanate + AH2. Functionally, catalyzes the two-electron reduction of urocanate to dihydrourocanate (also named imidazole propionate or deamino-histidine). Dihydrourocanate is present at higher concentrations in subjects with type 2 diabetes, and directly impairs glucose tolerance and insulin signaling at the level of insulin receptor substrate (IRS) through activation of p38 gamma (MAPK12)-p62-mTORC1. Therefore, the UrdA enzyme from the gut bacteria S.mutans strain UA159 may contribute to the pathogenesis of type 2 diabetes by producing the microbial metabolite dihydrourocanate. This is Urocanate reductase from Streptococcus mutans serotype c (strain ATCC 700610 / UA159).